A 94-amino-acid polypeptide reads, in one-letter code: Small ribosomal subunit protein uS19 (94 aa).

The protein belongs to the universal ribosomal protein uS19 family.

Functionally, protein S19 forms a complex with S13 that binds strongly to the 16S ribosomal RNA. This Lactobacillus acidophilus (strain ATCC 700396 / NCK56 / N2 / NCFM) protein is Small ribosomal subunit protein uS19 (rpsS).